The sequence spans 465 residues: A-type ATP synthase subunit B (465 aa).

The protein belongs to the ATPase alpha/beta chains family. The A-type ATPase is composed of subunits A(3), B(3), C, D, E(1 or 2), F, H(2), I and proteolipid K(x).

The protein localises to the cell membrane. Its function is as follows. Component of the A-type ATP synthase that produces ATP from ADP in the presence of a proton gradient across the membrane. The B chain is a regulatory subunit. In Methanocaldococcus jannaschii (strain ATCC 43067 / DSM 2661 / JAL-1 / JCM 10045 / NBRC 100440) (Methanococcus jannaschii), this protein is A-type ATP synthase subunit B.